Here is a 540-residue protein sequence, read N- to C-terminus: Probable G-protein coupled receptor 75 (540 aa).

Polar residues predominate over residues 1–15; it reads MNSTGHLQDAPNATS. The disordered stretch occupies residues 1-27; the sequence is MNSTGHLQDAPNATSLHVPHSQEGNST. Over 1–46 the chain is Extracellular; it reads MNSTGHLQDAPNATSLHVPHSQEGNSTSLQEGLQDLIHTATLVTCT. N-linked (GlcNAc...) asparagine glycosylation is found at asparagine 2, asparagine 12, and asparagine 25. The chain crosses the membrane as a helical span at residues 47 to 67; that stretch reads FLLAVIFCLGSYGNFIVFLSF. Residues 68 to 86 are Cytoplasmic-facing; sequence FDPAFRKFRTNFDFMILNL. A helical membrane pass occupies residues 87 to 107; sequence SFCDLFICGVTAPMFTFVLFF. Topologically, residues 108-120 are extracellular; that stretch reads SSASSIPDAFCFT. Residues 121-141 traverse the membrane as a helical segment; the sequence is FHLTSSGFIIMSLKTVAVIAL. Residues 142 to 160 are Cytoplasmic-facing; that stretch reads HRLRMVLGKQPNRTASFPC. The chain crosses the membrane as a helical span at residues 161 to 181; it reads TVLLTLLLWATSFTLATLATL. The Extracellular segment spans residues 182–205; sequence KTSKSHLCLPMSSLIAGKGKAILS. The helical transmembrane segment at 206–226 threads the bilayer; that stretch reads LYVVDFTFCVAVVSVSYIMIA. Residues 227–318 lie on the Cytoplasmic side of the membrane; sequence QTLRKNAQVR…INLSTAKDSK (92 aa). A helical membrane pass occupies residues 319 to 339; it reads AVVTCVIIVLSVLVCCLPLGI. Residues 340–350 lie on the Extracellular side of the membrane; it reads SLVQVVLSSNG. The helical transmembrane segment at 351–371 threads the bilayer; the sequence is SFILYQFELFGFTLIFFKSGL. Residues 372–540 are Cytoplasmic-facing; sequence NPFIYSRNSA…SAKQIPVPSV (169 aa).

Belongs to the G-protein coupled receptor 1 family. As to expression, expressed at high levels in brain and spinal cord and at detectable levels in retinal pigment epithelium. In situ hybridization of adult eye sections localized transcripts only to the perivascular cells, surrounding retinal arterioles, in the ganglion cell/nerve fiber layer. Also expressed by islet cells (at protein level).

It is found in the cell membrane. In terms of biological role, g protein-coupled receptor that is activated by the chemokine CCL5/RANTES. Probably coupled to heterotrimeric Gq proteins, it stimulates inositol trisphosphate production and calcium mobilization upon activation. Together with CCL5/RANTES, may play a role in neuron survival through activation of a downstream signaling pathway involving the PI3, Akt and MAP kinases. CCL5/RANTES may also regulate insulin secretion by pancreatic islet cells through activation of this receptor. This chain is Probable G-protein coupled receptor 75 (GPR75), found in Homo sapiens (Human).